Consider the following 348-residue polypeptide: Ketol-acid reductoisomerase (NADP(+)) (348 aa).

Positions 1 to 179 (MDVHYDADPA…GGTHAGVIET (179 aa)) constitute a KARI N-terminal Rossmann domain. Residues 22–25 (YGSQ), R45, S48, S50, and 80–83 (DQHQ) each bind NADP(+). H105 is an active-site residue. Position 131 (G131) interacts with NADP(+). The KARI C-terminal knotted domain occupies 180–325 (TFKDETETDL…QTLRGMMPWL (146 aa)). Residues D188, E192, E224, and E228 each coordinate Mg(2+). A substrate-binding site is contributed by S249. The tract at residues 323-348 (PWLNGDETSADEDAPDAADTAPASSS) is disordered. Residues 339-348 (AADTAPASSS) are compositionally biased toward low complexity.

Belongs to the ketol-acid reductoisomerase family. Mg(2+) serves as cofactor.

It carries out the reaction (2R)-2,3-dihydroxy-3-methylbutanoate + NADP(+) = (2S)-2-acetolactate + NADPH + H(+). The catalysed reaction is (2R,3R)-2,3-dihydroxy-3-methylpentanoate + NADP(+) = (S)-2-ethyl-2-hydroxy-3-oxobutanoate + NADPH + H(+). It functions in the pathway amino-acid biosynthesis; L-isoleucine biosynthesis; L-isoleucine from 2-oxobutanoate: step 2/4. The protein operates within amino-acid biosynthesis; L-valine biosynthesis; L-valine from pyruvate: step 2/4. Involved in the biosynthesis of branched-chain amino acids (BCAA). Catalyzes an alkyl-migration followed by a ketol-acid reduction of (S)-2-acetolactate (S2AL) to yield (R)-2,3-dihydroxy-isovalerate. In the isomerase reaction, S2AL is rearranged via a Mg-dependent methyl migration to produce 3-hydroxy-3-methyl-2-ketobutyrate (HMKB). In the reductase reaction, this 2-ketoacid undergoes a metal-dependent reduction by NADPH to yield (R)-2,3-dihydroxy-isovalerate. This Salinibacter ruber (strain DSM 13855 / M31) protein is Ketol-acid reductoisomerase (NADP(+)).